We begin with the raw amino-acid sequence, 451 residues long: MGSSQSVEIPGGGTEGYHVLRVQENSPGHRAGLEPFFDFIVSINGSRLNKDNDTLKDLLKANVEKPVKMLIYSSKTLELREASVTPSNLWGGQGLLGVSIRFCSFDGANENVWHVLEVESNSPAALAGLRPHSDYIIGADTVMNESEDLFSLIETHEAKPLKLYVYNTDTDNCREVIITPNSAWGGEGSLGCGIGYGYLHRIPTRPFEEGKKISLPGQMTGTPITPLKDGFTEVQLSSVSPPSLSPPGTTGVEQSLSGLSISSAPPAVSNVLSTGVPTVPLLPPQVNQSLASMPPMNPATTLPSLMPLSAGLPSLPNLPSLSNFNLPAPHIMPGVGLPELGSPGLPPLPSLPPRNLPGIAPLPMLSDFLPSFPLVPEGSSAASAGEPLSSLPAMGPPSDPVMTTAKADASSLTVDVTSPASKVPTTVEDRVSDCTPAVEKPVSDADASEPS.

G2 carries N-myristoyl glycine lipidation. PDZ GRASP-type domains are found at residues 15–105 and 111–199; these read EGYH…FCSF and NVWH…YGYL. The segment at 15-215 is GRASP; that stretch reads EGYHVLRVQE…PFEEGKKISL (201 aa). Dimethylated arginine occurs at positions 30 and 47. The tract at residues 194–199 is important for membrane binding; that stretch reads IGYGYL. A Phosphoserine modification is found at S214. T222 carries the post-translational modification Phosphothreonine. T225 is subject to Phosphothreonine; by MAPK. Residues 236–252 are compositionally biased toward low complexity; that stretch reads LSSVSPPSLSPPGTTGV. Disordered stretches follow at residues 236–255 and 377–451; these read LSSV…VEQS and EGSS…SEPS. Positions 410 to 424 are enriched in polar residues; sequence SSLTVDVTSPASKVP. Residue S411 is modified to Phosphoserine. A phosphothreonine mark is found at T417 and T435. Phosphoserine occurs at positions 443 and 448.

The protein belongs to the GORASP family. In terms of assembly, homodimer. Homooligomer. ER stress induces phosphorylation-dependent monomerization. Interacts with BLZF1/Golgin 45. Identified in a complex with RAB2 and GORASP2. Interacts with JAM2 and JAM3. Interacts with members of the p24 cargo receptors. Interacts with CNIH and the cytoplasmic domain of transmembrane TGFA, prior its transit in the trans-Golgi. Interacts with KCTD5. Interacts with TMED2 and TMED3. Interacts with SEC16A in response to ER stress. Interacts (via PDZ GRASP-type 1 domain) with core-glycosylated CFTR in response to ER stress. Myristoylated. Myristoylation is essential for the Golgi targeting. Post-translationally, palmitoylated. In terms of processing, phosphorylated in mitotic cells. ER stress-induced phosphorylation at Ser-443 induces monomerization and subsequent relocalization from Golgi to ER which is essential for mediating unconventional (ER/Golgi-independent) trafficking of CFTR to the cell membrane. Detected in lung, heart and testis. Colocalized in a polarized fashion in the acrosome region with JAM3 in round spermatids (at protein level).

The protein localises to the golgi apparatus membrane. It is found in the endoplasmic reticulum membrane. Its subcellular location is the golgi apparatus. Key structural protein of the Golgi apparatus. The membrane cisternae of the Golgi apparatus adhere to each other to form stacks, which are aligned side by side to form the Golgi ribbon. Acting in concert with GORASP1/GRASP65, is required for the formation and maintenance of the Golgi ribbon, and may be dispensable for the formation of stacks. However, other studies suggest that GORASP2 plays a role in assembly and membrane stacking of the Golgi cisternae, and in the process by which Golgi stacks reform after breakdown during mitosis and meiosis. May regulate the intracellular transport and presentation of a defined set of transmembrane proteins, such as transmembrane TGFA. Required for normal acrosome formation during spermiogenesis and normal male fertility, probably by promoting colocalization of JAM2 and JAM3 at contact sites between germ cells and Sertoli cells. Mediates ER stress-induced unconventional (ER/Golgi-independent) trafficking of core-glycosylated CFTR to cell membrane. This Mus musculus (Mouse) protein is Golgi reassembly-stacking protein 2 (Gorasp2).